Reading from the N-terminus, the 606-residue chain is Elongation factor 4 (606 aa).

Residues 11-193 enclose the tr-type G domain; that stretch reads DKIRNFSIVA…AIVTRLPPPK (183 aa). Residues 23-28 and 140-143 each bind GTP; these read DHGKST and NKVD.

It belongs to the TRAFAC class translation factor GTPase superfamily. Classic translation factor GTPase family. LepA subfamily.

The protein localises to the cell inner membrane. It carries out the reaction GTP + H2O = GDP + phosphate + H(+). Functionally, required for accurate and efficient protein synthesis under certain stress conditions. May act as a fidelity factor of the translation reaction, by catalyzing a one-codon backward translocation of tRNAs on improperly translocated ribosomes. Back-translocation proceeds from a post-translocation (POST) complex to a pre-translocation (PRE) complex, thus giving elongation factor G a second chance to translocate the tRNAs correctly. Binds to ribosomes in a GTP-dependent manner. This chain is Elongation factor 4, found in Caulobacter vibrioides (strain ATCC 19089 / CIP 103742 / CB 15) (Caulobacter crescentus).